The following is a 215-amino-acid chain: Thymidylate kinase (215 aa).

Glycine 7–serine 14 lines the ATP pocket.

The protein belongs to the thymidylate kinase family.

The catalysed reaction is dTMP + ATP = dTDP + ADP. Its function is as follows. Phosphorylation of dTMP to form dTDP in both de novo and salvage pathways of dTTP synthesis. This is Thymidylate kinase from Nitratidesulfovibrio vulgaris (strain DSM 19637 / Miyazaki F) (Desulfovibrio vulgaris).